The primary structure comprises 404 residues: Zinc finger CCCH domain-containing protein 15 homolog (404 aa).

The span at methionine 1 to proline 10 shows a compositional bias: pro residues. A disordered region spans residues methionine 1–leucine 71. The segment covering lysine 12–phenylalanine 28 has biased composition (basic and acidic residues). Residues glutamine 38 to glutamine 50 show a composition bias toward low complexity. Residues proline 56–leucine 71 show a composition bias toward basic and acidic residues. 2 consecutive C3H1-type zinc fingers follow at residues aspartate 94–serine 121 and proline 165–proline 202. Threonine 218 carries the post-translational modification Phosphothreonine. Serine 221 is subject to Phosphoserine. The stretch at leucine 246–aspartate 270 forms a coiled coil. 2 stretches are compositionally biased toward low complexity: residues glutamate 352 to aspartate 361 and proline 369 to proline 380. The segment at glutamate 352 to proline 380 is disordered.

Belongs to the ZC3H15/TMA46 family.

This is Zinc finger CCCH domain-containing protein 15 homolog from Drosophila melanogaster (Fruit fly).